A 142-amino-acid polypeptide reads, in one-letter code: Lysozyme 2 (142 aa).

The first 20 residues, 1–20 (MLKLTLTILAAVLLVTPAFG), serve as a signal peptide directing secretion. The C-type lysozyme domain maps to 21–142 (KVYTRCSLAR…HTLPSIDDCF (122 aa)). Disulfide bonds link Cys-26/Cys-141, Cys-47/Cys-131, Cys-82/Cys-98, and Cys-94/Cys-112. Residue Glu-52 is part of the active site. Residue Asn-66 is glycosylated (N-linked (GlcNAc...) asparagine). Asp-70 is an active-site residue.

This sequence belongs to the glycosyl hydrolase 22 family. In terms of tissue distribution, expressed only in the midgut where it is concentrated around the middle in all larval stages.

The protein localises to the secreted. The enzyme catalyses Hydrolysis of (1-&gt;4)-beta-linkages between N-acetylmuramic acid and N-acetyl-D-glucosamine residues in a peptidoglycan and between N-acetyl-D-glucosamine residues in chitodextrins.. Lysozymes have primarily a bacteriolytic function. Shows antibacterial activity against Gram-positive bacterium M.luteus but shows no activity against Gram-negative bacterium E.coli. Likely to play a role in the eradication of ingested pathogens during their passage through the intestine. This chain is Lysozyme 2, found in Lucilia sericata (Green bottle fly).